The primary structure comprises 327 residues: MQNLKFLIAAVSCLGPALAAPTPTSNFINSNFNKRASVEDSAFGYASLNGGTTGGAGGTTTTVSSYAEFTAAVQGDDPKIVIVSGPIEETAEQVDVGSNTSILGADSSAVLTGFGLRLKEVENVIIRNLGIAKVLADNGDAIGAEYSNNIWIDHVDVSSDRDHDKDYYDGLLDFKRGSDYITVSNSFIHDHWKASLVGHSNSNEDEDSGKLHVTYANNYWYNLNSRAPSIRFGTGHIYNNYYETVSDGINTRIGAQVLVEGNVFVDSKKALYSTDEGYAVERNNDFGDAKNEALEGTLTSVEYEYDLLDTSEVKSAVVGTAGQTLTF.

The first 19 residues, 1–19 (MQNLKFLIAAVSCLGPALA), serve as a signal peptide directing secretion. The N-linked (GlcNAc...) asparagine glycan is linked to Asn99. Ca(2+) contacts are provided by Asp140, Asp169, and Asp173. Arg226 is an active-site residue.

It belongs to the polysaccharide lyase 1 family. Ca(2+) is required as a cofactor.

The protein resides in the secreted. It catalyses the reaction Eliminative cleavage of (1-&gt;4)-alpha-D-galacturonan to give oligosaccharides with 4-deoxy-alpha-D-galact-4-enuronosyl groups at their non-reducing ends.. In terms of biological role, pectinolytic enzyme consist of four classes of enzymes: pectin lyase, polygalacturonase, pectin methylesterase and rhamnogalacturonase. Among pectinolytic enzymes, pectin lyase is the most important in depolymerization of pectin, since it cleaves internal glycosidic bonds of highly methylated pectins. Favors pectate, the anion, over pectin, the methyl ester. The sequence is that of Pectate lyase A (plyA) from Emericella nidulans (strain FGSC A4 / ATCC 38163 / CBS 112.46 / NRRL 194 / M139) (Aspergillus nidulans).